The sequence spans 277 residues: Bis(5'-nucleosyl)-tetraphosphatase, symmetrical (277 aa).

This sequence belongs to the Ap4A hydrolase family.

It catalyses the reaction P(1),P(4)-bis(5'-adenosyl) tetraphosphate + H2O = 2 ADP + 2 H(+). Its function is as follows. Hydrolyzes diadenosine 5',5'''-P1,P4-tetraphosphate to yield ADP. The protein is Bis(5'-nucleosyl)-tetraphosphatase, symmetrical of Bordetella bronchiseptica (strain ATCC BAA-588 / NCTC 13252 / RB50) (Alcaligenes bronchisepticus).